The chain runs to 209 residues: Putative BTB/POZ domain-containing protein At2g40450 (209 aa).

Positions 24-98 constitute a BTB domain; it reads ADVRLKAGDS…IYRVDGSICS (75 aa).

The protein operates within protein modification; protein ubiquitination. Functionally, may act as a substrate-specific adapter of an E3 ubiquitin-protein ligase complex (CUL3-RBX1-BTB) which mediates the ubiquitination and subsequent proteasomal degradation of target proteins. This is Putative BTB/POZ domain-containing protein At2g40450 from Arabidopsis thaliana (Mouse-ear cress).